The chain runs to 469 residues: Glutamine synthetase (469 aa).

One can recognise a GS beta-grasp domain in the interval 15 to 96; sequence EDVKFVDVRF…INFFIHDPIT (82 aa). Residues 104 to 469 enclose the GS catalytic domain; the sequence is PRNVAKKAEA…PHEFEMYFDV (366 aa). Positions 129 and 131 each coordinate Mg(2+). Glu205 contributes to the ATP binding site. Residues Glu210 and Glu218 each coordinate Mg(2+). 221–223 provides a ligand contact to ATP; sequence YKF. L-glutamate is bound by residues 262-263 and Gly263; that span reads NG. His267 is a binding site for Mg(2+). ATP contacts are provided by residues 269 to 271 and Ser271; that span reads HQS. L-glutamate contacts are provided by Arg320, Glu326, and Arg338. 3 residues coordinate ATP: Arg338, Arg343, and Lys352. Glu357 contributes to the Mg(2+) binding site. Residue Arg359 coordinates L-glutamate. The residue at position 397 (Tyr397) is an O-AMP-tyrosine.

This sequence belongs to the glutamine synthetase family. Oligomer of 12 subunits arranged in the form of two hexagons. Mg(2+) is required as a cofactor.

Its subcellular location is the cytoplasm. The enzyme catalyses L-glutamate + NH4(+) + ATP = L-glutamine + ADP + phosphate + H(+). With respect to regulation, the activity of this enzyme could be controlled by adenylation under conditions of abundant glutamine. Functionally, catalyzes the ATP-dependent biosynthesis of glutamine from glutamate and ammonia. Complements L-glutamine auxotrophy of an E.coli glnA mutant. The polypeptide is Glutamine synthetase (Streptomyces coelicolor (strain ATCC BAA-471 / A3(2) / M145)).